The following is a 436-amino-acid chain: Anhydro-N-acetylmuramic acid kinase (436 aa).

Glycine 32 to aspartate 39 is a binding site for ATP.

It belongs to the anhydro-N-acetylmuramic acid kinase family.

The catalysed reaction is 1,6-anhydro-N-acetyl-beta-muramate + ATP + H2O = N-acetyl-D-muramate 6-phosphate + ADP + H(+). It functions in the pathway amino-sugar metabolism; 1,6-anhydro-N-acetylmuramate degradation. Its pathway is cell wall biogenesis; peptidoglycan recycling. Its function is as follows. Catalyzes the specific phosphorylation of 1,6-anhydro-N-acetylmuramic acid (anhMurNAc) with the simultaneous cleavage of the 1,6-anhydro ring, generating MurNAc-6-P. Is required for the utilization of anhMurNAc either imported from the medium or derived from its own cell wall murein, and thus plays a role in cell wall recycling. In Psychrobacter arcticus (strain DSM 17307 / VKM B-2377 / 273-4), this protein is Anhydro-N-acetylmuramic acid kinase.